We begin with the raw amino-acid sequence, 301 residues long: Vomeronasal type-1 receptor 4 (301 aa).

Over 1–15 the chain is Extracellular; that stretch reads MASRYVAVGMMLSQT. A helical transmembrane segment spans residues 16–36; that stretch reads VVGVLGSFSLLLHYLSLHYIG. The Cytoplasmic segment spans residues 37–48; that stretch reads CRLRSADLIVKH. A helical membrane pass occupies residues 49-69; that stretch reads LIAASFLTLLCKGVPQTMAAF. Topologically, residues 70-88 are extracellular; sequence RVRYFLNAIGCKLVFYLHR. A helical membrane pass occupies residues 89-107; that stretch reads VGRGVSTGTTCLLSVFQVI. Topologically, residues 108–126 are cytoplasmic; sequence TVSSRKSRWAKLKEKAPKH. A helical transmembrane segment spans residues 127-147; the sequence is VGFSVLLCWILCMLVNIIFPI. Residues 148-185 lie on the Extracellular side of the membrane; that stretch reads YVTGKRNHTNITVNKDLGDCCGRGNNKIAQTLRAMLLS. N-linked (GlcNAc...) asparagine glycosylation is found at Asn-154 and Asn-157. A helical transmembrane segment spans residues 186 to 206; the sequence is FPDVLCLGFMLWASSSMVCIL. The Cytoplasmic portion of the chain corresponds to 207–234; it reads HRHKQRVQHIHRSNLSPRASPENRATQS. Residues 235 to 255 traverse the membrane as a helical segment; that stretch reads ILIPVSTFVSSYTLSCLLQVC. Over 256 to 264 the chain is Extracellular; the sequence is MALLDNPNS. The helical transmembrane segment at 265 to 285 threads the bilayer; sequence LLVNTSALMSACFPTLSPFVL. The Cytoplasmic segment spans residues 286-301; the sequence is MSCDPSVYRLCFAWKR.

This sequence belongs to the G-protein coupled receptor 1 family.

The protein resides in the cell membrane. Putative pheromone receptor. The polypeptide is Vomeronasal type-1 receptor 4 (VN1R4) (Pongo pygmaeus (Bornean orangutan)).